The sequence spans 433 residues: Xylose isomerase (433 aa).

Residues D305 and D307 each coordinate Mg(2+).

Belongs to the xylose isomerase family. Homotetramer. Mg(2+) is required as a cofactor.

It localises to the cytoplasm. The enzyme catalyses alpha-D-xylose = alpha-D-xylulofuranose. This chain is Xylose isomerase, found in Cereibacter sphaeroides (strain KD131 / KCTC 12085) (Rhodobacter sphaeroides).